Reading from the N-terminus, the 193-residue chain is Cysteine and glycine-rich protein 2 (193 aa).

Residues 10-61 (CGACGRTVYHAEEVQCDGRSFHRCCFLCMVCRKNLDSTTVAIHDEEIYCKSC) enclose the LIM zinc-binding 1 domain. Residues 64 to 69 (KKYGPK) carry the Nuclear localization signal motif. Lys91 participates in a covalent cross-link: Glycyl lysine isopeptide (Lys-Gly) (interchain with G-Cter in SUMO2). An N6-acetyllysine mark is found at Lys112 and Lys131. Residues 119–170 (CSRCGDSVYAAEKIIGAGKPWHKNCFRCAKCGKSLESTTLTEKEGEIYCKGC) enclose the LIM zinc-binding 2 domain. Lys137 carries the N6-acetyllysine; alternate modification. At Lys137 the chain carries N6-succinyllysine; alternate. Lys161 is modified (N6-acetyllysine).

In terms of assembly, interacts with KAT14. The LIM domain 1 is necessary and sufficient for this interaction. Interacts with GLRX3.

It is found in the nucleus. Functionally, drastically down-regulated in response to PDGF-BB or cell injury, that promote smooth muscle cell proliferation and dedifferentiation. Seems to play a role in the development of the embryonic vascular system. This is Cysteine and glycine-rich protein 2 (Csrp2) from Mus musculus (Mouse).